The sequence spans 197 residues: uncharacterized protein (197 aa).

This is an uncharacterized protein from Acanthamoeba polyphaga (Amoeba).